The primary structure comprises 149 residues: Cytochrome c-type biogenesis protein CcmE (149 aa).

The Cytoplasmic segment spans residues 1–7 (MTRKQKR). The chain crosses the membrane as a helical; Signal-anchor for type II membrane protein span at residues 8–28 (LAVIAGGVGFIMVAVLLVLFA). The Periplasmic segment spans residues 29 to 149 (FGQSIAYFYM…GVWKGEGEAK (121 aa)). Residues H123 and Y127 each coordinate heme.

It belongs to the CcmE/CycJ family.

The protein localises to the cell inner membrane. Heme chaperone required for the biogenesis of c-type cytochromes. Transiently binds heme delivered by CcmC and transfers the heme to apo-cytochromes in a process facilitated by CcmF and CcmH. In Allorhizobium ampelinum (strain ATCC BAA-846 / DSM 112012 / S4) (Agrobacterium vitis (strain S4)), this protein is Cytochrome c-type biogenesis protein CcmE.